We begin with the raw amino-acid sequence, 69 residues long: Large ribosomal subunit protein bL28 (69 aa).

Belongs to the bacterial ribosomal protein bL28 family.

In Oleidesulfovibrio alaskensis (strain ATCC BAA-1058 / DSM 17464 / G20) (Desulfovibrio alaskensis), this protein is Large ribosomal subunit protein bL28.